We begin with the raw amino-acid sequence, 175 residues long: Nucleoside diphosphate kinase 6 (175 aa).

Lysine 15, phenylalanine 63, arginine 91, threonine 97, arginine 111, and asparagine 121 together coordinate ATP. The Pros-phosphohistidine intermediate role is filled by histidine 124.

This sequence belongs to the NDK family. Mg(2+) serves as cofactor.

The enzyme catalyses a 2'-deoxyribonucleoside 5'-diphosphate + ATP = a 2'-deoxyribonucleoside 5'-triphosphate + ADP. The catalysed reaction is a ribonucleoside 5'-diphosphate + ATP = a ribonucleoside 5'-triphosphate + ADP. In terms of biological role, major role in the synthesis of nucleoside triphosphates other than ATP. The ATP gamma phosphate is transferred to the NDP beta phosphate via a ping-pong mechanism, using a phosphorylated active-site intermediate. The sequence is that of Nucleoside diphosphate kinase 6 (nme6) from Danio rerio (Zebrafish).